The primary structure comprises 297 residues: tRNA dimethylallyltransferase (297 aa).

15-22 lines the ATP pocket; sequence GPTASGKS. A substrate-binding site is contributed by 17–22; sequence TASGKS. Interaction with substrate tRNA regions lie at residues 40–43 and 164–168; these read DSMQ and QRIVR.

The protein belongs to the IPP transferase family. In terms of assembly, monomer. Mg(2+) serves as cofactor.

It carries out the reaction adenosine(37) in tRNA + dimethylallyl diphosphate = N(6)-dimethylallyladenosine(37) in tRNA + diphosphate. Catalyzes the transfer of a dimethylallyl group onto the adenine at position 37 in tRNAs that read codons beginning with uridine, leading to the formation of N6-(dimethylallyl)adenosine (i(6)A). In Rhizobium johnstonii (strain DSM 114642 / LMG 32736 / 3841) (Rhizobium leguminosarum bv. viciae), this protein is tRNA dimethylallyltransferase.